A 531-amino-acid chain; its full sequence is Light-independent protochlorophyllide reductase subunit B (531 aa).

Asp36 lines the [4Fe-4S] cluster pocket. Asp287 (proton donor) is an active-site residue. Position 422 to 423 (422 to 423) interacts with substrate; it reads GL.

Belongs to the ChlB/BchB/BchZ family. As to quaternary structure, protochlorophyllide reductase is composed of three subunits; BchL, BchN and BchB. Forms a heterotetramer of two BchB and two BchN subunits. It depends on [4Fe-4S] cluster as a cofactor.

The catalysed reaction is chlorophyllide a + oxidized 2[4Fe-4S]-[ferredoxin] + 2 ADP + 2 phosphate = protochlorophyllide a + reduced 2[4Fe-4S]-[ferredoxin] + 2 ATP + 2 H2O. It participates in porphyrin-containing compound metabolism; bacteriochlorophyll biosynthesis (light-independent). In terms of biological role, component of the dark-operative protochlorophyllide reductase (DPOR) that uses Mg-ATP and reduced ferredoxin to reduce ring D of protochlorophyllide (Pchlide) to form chlorophyllide a (Chlide). This reaction is light-independent. The NB-protein (BchN-BchB) is the catalytic component of the complex. The chain is Light-independent protochlorophyllide reductase subunit B from Rhodopseudomonas palustris (strain BisA53).